A 399-amino-acid polypeptide reads, in one-letter code: Zinc metalloproteinase nas-25 (399 aa).

Positions 1–20 are cleaved as a signal peptide; that stretch reads MQIYLGITICLVAFLTVIDC. In terms of domain architecture, Peptidase M12A spans 41–237; that stretch reads QVQRDLTYRW…DQINQYYQCY (197 aa). N-linked (GlcNAc...) asparagine glycans are attached at residues Asn-52 and Asn-61. Cystine bridges form between Cys-82/Cys-236, Cys-106/Cys-126, Cys-240/Cys-260, and Cys-265/Cys-274. Position 134 (His-134) interacts with Zn(2+). The active site involves Glu-135. His-138 and His-144 together coordinate Zn(2+). In terms of domain architecture, EGF-like spans 232–275; sequence QYYQCYDSCRNAGQLANCANGGIPNPNNCQVCNCPMGYGGDLCD. Asn-371 carries an N-linked (GlcNAc...) asparagine glycan.

It depends on Zn(2+) as a cofactor. In terms of tissue distribution, expressed in pharyngeal muscles, pharyngeal-intestinal valve, rectal gland cells and arcade cells.

It localises to the secreted. Its function is as follows. Metalloprotease. This chain is Zinc metalloproteinase nas-25 (nas-25), found in Caenorhabditis elegans.